Here is a 223-residue protein sequence, read N- to C-terminus: 26S proteasome non-ATPase regulatory subunit 9 (223 aa).

Over residues 103 to 121 (RDKEKQARDMAEAHKEAMS) the composition is skewed to basic and acidic residues. The segment at 103–141 (RDKEKQARDMAEAHKEAMSRKLGQSESQGPPRAFAKVNS) is disordered. Residues 108-195 (QARDMAEAHK…KPLNVTVIRR (88 aa)) enclose the PDZ domain. Serine 129 bears the Phosphoserine mark.

This sequence belongs to the proteasome subunit p27 family. In terms of assembly, interacts with PSMC3. Part of a transient complex (modulator) containing PSMD9, PSMC6 and PSMC3 formed during the assembly of the 26S proteasome. Expressed in all tissues tested, highly expressed in liver and kidney.

Functionally, acts as a chaperone during the assembly of the 26S proteasome, specifically of the base subcomplex of the PA700/19S regulatory complex (RC). During the base subcomplex assembly is part of an intermediate PSMD9:PSMC6:PSMC3 module, also known as modulator trimer complex; PSMD9 is released during the further base assembly process. The protein is 26S proteasome non-ATPase regulatory subunit 9 (PSMD9) of Homo sapiens (Human).